The following is a 62-amino-acid chain: Large ribosomal subunit protein bL32 (62 aa).

Belongs to the bacterial ribosomal protein bL32 family.

This chain is Large ribosomal subunit protein bL32, found in Levilactobacillus brevis (strain ATCC 367 / BCRC 12310 / CIP 105137 / JCM 1170 / LMG 11437 / NCIMB 947 / NCTC 947) (Lactobacillus brevis).